The primary structure comprises 200 residues: Blue fluorescence protein (200 aa).

2 Lumazine-binding repeats span residues 1 to 111 (MFKG…TGGR) and 112 to 200 (SLSG…AGNW).

As to quaternary structure, monomer.

It is found in the cytoplasm. In terms of biological role, blue fluorescence protein (BFP) that can bind 6,7-dimethyl-8-ribityllumazine, riboflavin, and 6-methyl-7-oxo-8-ribityllumazine as a bound fluorophore. Has no riboflavin-synthase activity. The sequence is that of Blue fluorescence protein from Aliivibrio fischeri (Vibrio fischeri).